Here is a 688-residue protein sequence, read N- to C-terminus: UvrABC system protein C (688 aa).

The region spanning 11 to 90 (LTPGVYLYKD…IKKHRPRYNI (80 aa)) is the GIY-YIG domain. In terms of domain architecture, UVR spans 200-235 (GELVDALRTEMEAASQGLDFERAAVLRDRIRALERT).

The protein belongs to the UvrC family. As to quaternary structure, interacts with UvrB in an incision complex.

It is found in the cytoplasm. Its function is as follows. The UvrABC repair system catalyzes the recognition and processing of DNA lesions. UvrC both incises the 5' and 3' sides of the lesion. The N-terminal half is responsible for the 3' incision and the C-terminal half is responsible for the 5' incision. The sequence is that of UvrABC system protein C from Nitratidesulfovibrio vulgaris (strain ATCC 29579 / DSM 644 / CCUG 34227 / NCIMB 8303 / VKM B-1760 / Hildenborough) (Desulfovibrio vulgaris).